The primary structure comprises 553 residues: Copine-9 (553 aa).

C2 domains are found at residues 1–125 (MSLS…ERPL) and 132–255 (KCGT…FTVY). Ca(2+)-binding residues include Asp163, Asp169, Asp225, Asp227, and Asp233. One can recognise a VWFA domain in the interval 299–500 (NFTVAIDFTA…VQFVPFRDYV (202 aa)). The tract at residues 531–553 (TRDIQPRPPPPVSPNPTPAPEQP) is disordered. The span at 536-553 (PRPPPPVSPNPTPAPEQP) shows a compositional bias: pro residues.

It belongs to the copine family. Ca(2+) serves as cofactor.

In terms of biological role, probable calcium-dependent phospholipid-binding protein that may play a role in calcium-mediated intracellular processes. Plays a role in dendrite formation by melanocytes. The sequence is that of Copine-9 from Mus musculus (Mouse).